The following is a 471-amino-acid chain: UDP-N-acetylmuramate--L-alanine ligase (471 aa).

112-118 (GTHGKTT) provides a ligand contact to ATP.

The protein belongs to the MurCDEF family.

It localises to the cytoplasm. It catalyses the reaction UDP-N-acetyl-alpha-D-muramate + L-alanine + ATP = UDP-N-acetyl-alpha-D-muramoyl-L-alanine + ADP + phosphate + H(+). The protein operates within cell wall biogenesis; peptidoglycan biosynthesis. Functionally, cell wall formation. This Cupriavidus metallidurans (strain ATCC 43123 / DSM 2839 / NBRC 102507 / CH34) (Ralstonia metallidurans) protein is UDP-N-acetylmuramate--L-alanine ligase.